The chain runs to 319 residues: Replication factor C small subunit (319 aa).

Residue 45–52 (GPPGTGKT) coordinates ATP.

It belongs to the activator 1 small subunits family. RfcS subfamily. In terms of assembly, heteropentamer composed of four small subunits (RfcS) and one large subunit (RfcL). Both subunits interact with PCNA.

In terms of biological role, part of the RFC clamp loader complex which loads the PCNA sliding clamp onto DNA. The complex possesses DNA-dependent ATPase activity which is further stimulated by PCNA. This is Replication factor C small subunit (rfcS) from Archaeoglobus fulgidus (strain ATCC 49558 / DSM 4304 / JCM 9628 / NBRC 100126 / VC-16).